The chain runs to 309 residues: Porphobilinogen deaminase (309 aa).

Position 241 is an S-(dipyrrolylmethanemethyl)cysteine (Cys241).

Belongs to the HMBS family. Monomer. It depends on dipyrromethane as a cofactor.

The enzyme catalyses 4 porphobilinogen + H2O = hydroxymethylbilane + 4 NH4(+). Its pathway is porphyrin-containing compound metabolism; protoporphyrin-IX biosynthesis; coproporphyrinogen-III from 5-aminolevulinate: step 2/4. Its function is as follows. Tetrapolymerization of the monopyrrole PBG into the hydroxymethylbilane pre-uroporphyrinogen in several discrete steps. This Desulforudis audaxviator (strain MP104C) protein is Porphobilinogen deaminase.